A 358-amino-acid chain; its full sequence is Testis-specific serine/threonine-protein kinase 2 (358 aa).

A Protein kinase domain is found at 12-272 (YIVGINLGKG…IDEILSHSWL (261 aa)). ATP-binding positions include 18 to 26 (LGKGSYAKV) and lysine 41. Catalysis depends on aspartate 136, which acts as the Proton acceptor. 2 stretches are compositionally biased toward basic and acidic residues: residues 296-315 (DCKL…DHKL) and 329-358 (NEDR…KAST). The segment at 296-358 (DCKLDTRPGS…SGAEVEKAST (63 aa)) is disordered.

The protein belongs to the protein kinase superfamily. CAMK Ser/Thr protein kinase family. As to quaternary structure, interacts with TSSK1B. Interacts with HSP90; this interaction stabilizes TSSK2. Requires Mg(2+) as cofactor. Autophosphorylated. Post-translationally, ubiquitinated; HSP90 activity negatively regulates ubiquitination and degradation. In terms of tissue distribution, testis-specific. Expressed only in the spermatids postmeiotically at the final stages of cytodifferentiation in the seminiferous tubules (at protein level). Not detected in released sperms in the lumen of the seminiferous tubules. Also present in the epididymal sperm (at protein level).

The protein resides in the cytoplasm. The protein localises to the cytoskeleton. It is found in the microtubule organizing center. It localises to the centrosome. Its subcellular location is the centriole. The protein resides in the cytoplasmic vesicle. The protein localises to the secretory vesicle. It is found in the acrosome. The enzyme catalyses L-seryl-[protein] + ATP = O-phospho-L-seryl-[protein] + ADP + H(+). It carries out the reaction L-threonyl-[protein] + ATP = O-phospho-L-threonyl-[protein] + ADP + H(+). With respect to regulation, activated by phosphorylation on Thr-174, potentially by autophosphorylation. Its function is as follows. Testis-specific serine/threonine-protein kinase required during spermatid development. Phosphorylates 'Ser-281' of TSKS and SPAG16. Involved in the late stages of spermatogenesis, during the reconstruction of the cytoplasm. During spermatogenesis, required for the transformation of a ring-shaped structure around the base of the flagellum originating from the chromatoid body. The sequence is that of Testis-specific serine/threonine-protein kinase 2 (Tssk2) from Mus musculus (Mouse).